The sequence spans 183 residues: Bifunctional protein PyrR (183 aa).

A PRPP-binding motif is present at residues 102-114; that stretch reads VVLVDDVLYTGRT.

It belongs to the purine/pyrimidine phosphoribosyltransferase family. PyrR subfamily. As to quaternary structure, homodimer and homohexamer; in equilibrium.

The enzyme catalyses UMP + diphosphate = 5-phospho-alpha-D-ribose 1-diphosphate + uracil. Its function is as follows. Regulates transcriptional attenuation of the pyrimidine nucleotide (pyr) operon by binding in a uridine-dependent manner to specific sites on pyr mRNA. This disrupts an antiterminator hairpin in the RNA and favors formation of a downstream transcription terminator, leading to a reduced expression of downstream genes. Functionally, also displays a weak uracil phosphoribosyltransferase activity which is not physiologically significant. This Listeria welshimeri serovar 6b (strain ATCC 35897 / DSM 20650 / CCUG 15529 / CIP 8149 / NCTC 11857 / SLCC 5334 / V8) protein is Bifunctional protein PyrR.